The primary structure comprises 557 residues: Urocanate hydratase (557 aa).

NAD(+) is bound by residues 53 to 54 (GG), glutamine 131, 177 to 179 (GMG), glutamate 197, arginine 202, 243 to 244 (NA), 264 to 268 (QTSAH), 274 to 275 (YL), and tyrosine 323. Cysteine 411 is a catalytic residue. The segment at 445–464 (LDSGSVSSPNRETESMRDGS) is disordered. Residues 455–464 (RETESMRDGS) are compositionally biased toward basic and acidic residues. Glycine 493 provides a ligand contact to NAD(+).

The protein belongs to the urocanase family. NAD(+) is required as a cofactor.

It is found in the cytoplasm. It catalyses the reaction 4-imidazolone-5-propanoate = trans-urocanate + H2O. It functions in the pathway amino-acid degradation; L-histidine degradation into L-glutamate; N-formimidoyl-L-glutamate from L-histidine: step 2/3. In terms of biological role, catalyzes the conversion of urocanate to 4-imidazolone-5-propionate. In Pseudomonas putida (strain W619), this protein is Urocanate hydratase.